Here is a 257-residue protein sequence, read N- to C-terminus: UPF0259 membrane protein WIGBR3650 (257 aa).

6 helical membrane passes run 23–43 (IIFFSTISAIISSLINYIFLP), 89–109 (LSSLVGNAFLFSNIITMINTI), 122–142 (IILSSSLIPKFLTLIFLISFL), 148–168 (ALMLIPGIIVLIFLSFSPILI), 190–210 (IKTVAPIIFLWLLIKLIILVI), and 223–243 (VKIFFYLINNIITVYIIIYMY).

This sequence belongs to the UPF0259 family.

It is found in the cell membrane. This Wigglesworthia glossinidia brevipalpis protein is UPF0259 membrane protein WIGBR3650.